Reading from the N-terminus, the 436-residue chain is Gamma-glutamyl phosphate reductase (436 aa).

The protein belongs to the gamma-glutamyl phosphate reductase family.

It localises to the cytoplasm. The catalysed reaction is L-glutamate 5-semialdehyde + phosphate + NADP(+) = L-glutamyl 5-phosphate + NADPH + H(+). Its pathway is amino-acid biosynthesis; L-proline biosynthesis; L-glutamate 5-semialdehyde from L-glutamate: step 2/2. Its function is as follows. Catalyzes the NADPH-dependent reduction of L-glutamate 5-phosphate into L-glutamate 5-semialdehyde and phosphate. The product spontaneously undergoes cyclization to form 1-pyrroline-5-carboxylate. This Salinibacter ruber (strain DSM 13855 / M31) protein is Gamma-glutamyl phosphate reductase.